A 325-amino-acid chain; its full sequence is MSLISIRIRSKTGVENIKLESQLKLKELQNIIEEKTKISTDTQKILYGFPPKALDLSNQDAVISGFLANGDTITIENVSSISSNPGVDSVTNDKVTSSTNSFDRNIKSQPFISQEEEEDGGYATRRVTDDDNSCLFSAVAYVLEDKNRLKGYSLRALIAQNVKSDPFEYNEAVLGKSNEGYCNWIQNPKNWGGAIELSILSNHYKVEIAAFDISTQLMYCYGEDRKYTERVYLIYDGIHYDALSICLTKNGPEDFDITRFSVDDKDSLAKMKVLIEKEFKAGKFTDTAKFSLICLNCNKTLKGEKEAAIHASTTGHGNFTEYKKR.

The tract at residues 7-86 (RIRSKTGVEN…NVSSISSNPG (80 aa)) is UBX-like. Residues 123-246 (ATRRVTDDDN…GIHYDALSIC (124 aa)) form the OTU domain. The interval 128–134 (TDDDNSC) is cys-loop. Asp131 is a catalytic residue. The Nucleophile role is filled by Cys134. The variable-loop stretch occupies residues 185-195 (IQNPKNWGGAI). The tract at residues 235–239 (YDGIH) is his-loop. Ile238 provides a ligand contact to substrate. His239 is an active-site residue. The interval 265–270 (KDSLAK) is S2 site. The segment at 292–316 (LICLNCNKTLKGEKEAAIHASTTGH) adopts a C2H2-type zinc-finger fold. His316 is a catalytic residue.

It localises to the cytoplasm. The catalysed reaction is Thiol-dependent hydrolysis of ester, thioester, amide, peptide and isopeptide bonds formed by the C-terminal Gly of ubiquitin (a 76-residue protein attached to proteins as an intracellular targeting signal).. Functionally, hydrolase that can remove conjugated ubiquitin from proteins and may therefore play an important regulatory role at the level of protein turnover by preventing degradation. This Dictyostelium discoideum (Social amoeba) protein is Ubiquitin thioesterase OTU1 (yod1).